Consider the following 132-residue polypeptide: Outer membrane protein RomA (132 aa).

To M.tuberculosis Rv0906.

Its subcellular location is the cell outer membrane. This is Outer membrane protein RomA (romA) from Klebsiella pneumoniae.